The following is a 439-amino-acid chain: tRNA(Ile)-lysidine synthase (439 aa).

Position 23 to 28 (23 to 28 (SGGLDS)) interacts with ATP.

This sequence belongs to the tRNA(Ile)-lysidine synthase family.

Its subcellular location is the cytoplasm. It catalyses the reaction cytidine(34) in tRNA(Ile2) + L-lysine + ATP = lysidine(34) in tRNA(Ile2) + AMP + diphosphate + H(+). In terms of biological role, ligates lysine onto the cytidine present at position 34 of the AUA codon-specific tRNA(Ile) that contains the anticodon CAU, in an ATP-dependent manner. Cytidine is converted to lysidine, thus changing the amino acid specificity of the tRNA from methionine to isoleucine. In Methylococcus capsulatus (strain ATCC 33009 / NCIMB 11132 / Bath), this protein is tRNA(Ile)-lysidine synthase.